We begin with the raw amino-acid sequence, 2266 residues long: Protein ELYS (2266 aa).

Positions 1–494 (MRDLRAQVTS…SGVVHLTCTG (494 aa)) are seven-bladed beta propeller repeats. Residues 1–981 (MRDLRAQVTS…QTLKINVMND (981 aa)) are necessary for cytoplasmic localization. Phosphoserine is present on residues serine 509, serine 528, serine 1080, serine 1138, serine 1142, serine 1150, serine 1153, serine 1155, and serine 1160. The tract at residues 591–1092 (VVLTKEEFDR…IEEPSPIVYS (502 aa)) is important for nuclear localization. The disordered stretch occupies residues 1019-2266 (YHLSTSSVFR…PKQILRRKML (1248 aa)). Residues 1149-2266 (RSLPSSSQLK…PKQILRRKML (1118 aa)) form a necessary for nuclear localization region. Phosphothreonine is present on threonine 1175. Residues serine 1214, serine 1218, serine 1222, serine 1232, and serine 1250 each carry the phosphoserine modification. Threonine 1257 carries the phosphothreonine modification. A phosphoserine mark is found at serine 1283 and serine 1297. Composition is skewed to polar residues over residues 1305–1320 (KGNS…TTLE) and 1335–1353 (FTAS…NVTE). The residue at position 1369 (threonine 1369) is a Phosphothreonine. Serine 1371 and serine 1513 each carry phosphoserine. The interval 1446-1698 (RANDNKSMAD…MEQSIHETIP (253 aa)) is mediates transcriptional activity. Residue threonine 1517 is modified to Phosphothreonine. Phosphoserine occurs at positions 1533, 1541, 1729, and 1806. Polar residues-rich tracts occupy residues 1796-1808 (LSQN…NSVT) and 1822-1838 (ILEN…ITTG). Threonine 1808 is modified (phosphothreonine). Residues 1842-2266 (KRLKSSQLLE…PKQILRRKML (425 aa)) form an important for nuclear localization and chromatin binding region. Serine 1878, serine 1884, and serine 1898 each carry phosphoserine. The span at 1908 to 1919 (STNLDASENTGN) shows a compositional bias: polar residues. Basic and acidic residues-rich tracts occupy residues 1920 to 1930 (KQDDKSSDKQL) and 1940 to 1952 (GREV…REDS). A phosphoserine mark is found at serine 1944 and serine 1946. The a.T hook DNA-binding region spans 1971–1983 (PRKRGRPRKINPS). The segment covering 1986–2004 (VGSKAVKEERSPKKKEAPS) has biased composition (basic and acidic residues). Residues serine 1996, serine 2043, serine 2044, and serine 2060 each carry the phosphoserine modification. Residues 2064–2084 (VSEERTDEMTHKETNEQEERL) show a composition bias toward basic and acidic residues. Phosphoserine is present on residues serine 2089, serine 2120, serine 2123, and serine 2154. The segment covering 2169–2179 (NKLEDELKDDA) has biased composition (basic and acidic residues). Positions 2188 to 2197 (PKAKRIRTSK) are enriched in basic residues. Serine 2212, serine 2222, and serine 2226 each carry phosphoserine.

This sequence belongs to the ELYS family. In terms of assembly, associates with the Nup107-160 subcomplex of the NPC.

It is found in the cytoplasm. The protein resides in the nucleus. It localises to the nucleus envelope. Its subcellular location is the nucleus matrix. The protein localises to the chromosome. It is found in the centromere. The protein resides in the kinetochore. It localises to the nucleoplasm. Its subcellular location is the nuclear pore complex. Required for the assembly of a functional nuclear pore complex (NPC) on the surface of chromosomes as nuclei form at the end of mitosis. May initiate NPC assembly by binding to chromatin and recruiting the Nup107-160 subcomplex of the NPC. Also required for the localization of the Nup107-160 subcomplex of the NPC to the kinetochore during mitosis and for the completion of cytokinesis. In Homo sapiens (Human), this protein is Protein ELYS (AHCTF1).